Reading from the N-terminus, the 483-residue chain is Proline--tRNA ligase (483 aa).

This sequence belongs to the class-II aminoacyl-tRNA synthetase family. ProS type 3 subfamily. In terms of assembly, homodimer.

Its subcellular location is the cytoplasm. The catalysed reaction is tRNA(Pro) + L-proline + ATP = L-prolyl-tRNA(Pro) + AMP + diphosphate. In terms of biological role, catalyzes the attachment of proline to tRNA(Pro) in a two-step reaction: proline is first activated by ATP to form Pro-AMP and then transferred to the acceptor end of tRNA(Pro). This Sulfolobus acidocaldarius (strain ATCC 33909 / DSM 639 / JCM 8929 / NBRC 15157 / NCIMB 11770) protein is Proline--tRNA ligase.